A 70-amino-acid chain; its full sequence is Large ribosomal subunit protein bL31 (70 aa).

Zn(2+) is bound by residues C16, C18, C37, and C40.

It belongs to the bacterial ribosomal protein bL31 family. Type A subfamily. Part of the 50S ribosomal subunit. Zn(2+) is required as a cofactor.

In terms of biological role, binds the 23S rRNA. In Shewanella sediminis (strain HAW-EB3), this protein is Large ribosomal subunit protein bL31.